The sequence spans 611 residues: Sensor histidine kinase WalK (611 aa).

Over 1–13 the chain is Cytoplasmic; that stretch reads MNKVGFFRSIQFK. The chain crosses the membrane as a helical span at residues 14-34; sequence ITLIYVLLIIIAMQIIGVYFV. The Extracellular segment spans residues 35–182; it reads NQVEKSLISS…VFNQMKTINT (148 aa). A helical membrane pass occupies residues 183 to 203; that stretch reads ILASGTGLALVLTALLGIFLA. The region spanning 204–256 is the HAMP domain; it reads RTITHPLSDMRKQAMELAKGNFSRKVKKYGHDEIGQLATTFNHLTRELEDAQA. At 204 to 611 the chain is on the cytoplasmic side; it reads RTITHPLSDM…EEQEDDWDEA (408 aa). In terms of domain architecture, PAS spans 263–324; the sequence is RKLASVIAYM…QENYTFEDLV (62 aa). The PAC domain maps to 325–379; sequence EQQDSMLLEIERDDELTVLRVNFSVIQREHGKIDGLIAVIYDVTEQEKMDQERRE. In terms of domain architecture, Histidine kinase spans 383–602; the sequence is NVSHELRTPL…TITFTLPYKE (220 aa). Histidine 386 carries the phosphohistidine; by autocatalysis modification.

In terms of assembly, homodimer. Interacts with YycH and YycI. Post-translationally, autophosphorylated.

It is found in the cell membrane. It carries out the reaction ATP + protein L-histidine = ADP + protein N-phospho-L-histidine.. Member of the two-component regulatory system WalK/WalR involved in the regulation of the ftsAZ operon, the yocH and ykvT, cwlO, lytE, ydjM, yjeA, yoeB genes and the tagAB and tagDEF operons. Phosphorylates WalR. The polypeptide is Sensor histidine kinase WalK (Bacillus subtilis (strain 168)).